Consider the following 1001-residue polypeptide: Ankyrin repeat domain-containing protein 35 (1001 aa).

ANK repeat units follow at residues 53–82 (NGQS…DINS), 86–115 (DGST…NEDA), 119–148 (ENRS…FLDV), 152–181 (DGRT…RVNV), 185–214 (NDKS…DAGA), and 218–247 (TGHD…RRRR). Disordered regions lie at residues 256–296 (PDLA…PCSE), 352–482 (PRAS…VAEP), and 559–601 (PEVP…ALGG). Over residues 281 to 295 (PEEEQEEKEDEDPCS) the composition is skewed to acidic residues. A coiled-coil region spans residues 295-344 (SEEWRWKYEEERRKVVRLEQELVQKTEECKTQAAAYLDLENQIREQAQEL). The segment covering 402 to 422 (KKAEDSAPGKIQYEVHGRSQP) has biased composition (basic and acidic residues). Over residues 423–434 (EEQGPPQSPASE) the composition is skewed to low complexity. Over residues 440–450 (TGQQLTTNGAQ) the composition is skewed to polar residues. A compositionally biased stretch (basic and acidic residues) spans 579 to 588 (KQDEEKEKRV). 3 coiled-coil regions span residues 610 to 696 (KGQL…LLAS), 733 to 810 (ISTL…IGKL), and 851 to 968 (QELK…HEEI). Residues 879 to 902 (RRSGDLAAQAAEQERQASEMRGRS) are disordered. Residues 890–902 (EQERQASEMRGRS) show a composition bias toward basic and acidic residues.

This is Ankyrin repeat domain-containing protein 35 (ANKRD35) from Homo sapiens (Human).